We begin with the raw amino-acid sequence, 229 residues long: Peptide methionine sulfoxide reductase B3, chloroplastic (229 aa).

The N-terminal 71 residues, 1–71 (MGVQHLLKLR…NHNQWAASRC (71 aa)), are a transit peptide targeting the chloroplast. Positions 102–223 (EEEWEAILSP…NSISLKFIPA (122 aa)) constitute a MsrB domain. 4 residues coordinate Zn(2+): C141, C144, C187, and C190. C159 and C212 are joined by a disulfide. C212 functions as the Nucleophile in the catalytic mechanism.

It belongs to the MsrB Met sulfoxide reductase family. Requires Zn(2+) as cofactor.

The protein localises to the plastid. Its subcellular location is the chloroplast. The catalysed reaction is L-methionyl-[protein] + [thioredoxin]-disulfide + H2O = L-methionyl-(R)-S-oxide-[protein] + [thioredoxin]-dithiol. Functionally, catalyzes the reduction of methionine sulfoxide (MetSO) to methionine in proteins. Plays a protective role against oxidative stress by restoring activity to proteins that have been inactivated by methionine oxidation. MSRB family specifically reduces the MetSO R-enantiomer. In Oryza sativa subsp. japonica (Rice), this protein is Peptide methionine sulfoxide reductase B3, chloroplastic (MSRB3).